The primary structure comprises 87 residues: uncharacterized protein (87 aa).

The next 2 membrane-spanning stretches (helical) occupy residues 25–45 and 53–73; these read LVAA…WLGG and YAFL…LVTF.

It localises to the cell membrane. This is an uncharacterized protein from Paracoccus denitrificans.